The sequence spans 292 residues: ATP synthase gamma chain (292 aa).

This sequence belongs to the ATPase gamma chain family. F-type ATPases have 2 components, CF(1) - the catalytic core - and CF(0) - the membrane proton channel. CF(1) has five subunits: alpha(3), beta(3), gamma(1), delta(1), epsilon(1). CF(0) has three main subunits: a, b and c.

The protein localises to the cell inner membrane. In terms of biological role, produces ATP from ADP in the presence of a proton gradient across the membrane. The gamma chain is believed to be important in regulating ATPase activity and the flow of protons through the CF(0) complex. This Bradyrhizobium sp. (strain ORS 278) protein is ATP synthase gamma chain.